A 439-amino-acid chain; its full sequence is F-box/FBD/LRR-repeat protein At5g56570 (439 aa).

One can recognise an F-box domain in the interval 35–81; that stretch reads PTELSDMPDDLIFKIFSFLPFFKEDLATRFISEYGKGLWNPDPNAIF. LRR repeat units follow at residues 155 to 177 and 223 to 246; these read CTTL…WFRL and VPTL…SFWI. The region spanning 361 to 411 is the FBD domain; sequence VWEKPTVVPECLSTRLEILKWRDYEGTEHEKDMVGYILANATFLQRATFST.

This chain is F-box/FBD/LRR-repeat protein At5g56570, found in Arabidopsis thaliana (Mouse-ear cress).